The primary structure comprises 224 residues: Large ribosomal subunit protein uL1 (224 aa).

Belongs to the universal ribosomal protein uL1 family. Part of the 50S ribosomal subunit.

Binds directly to 23S rRNA. The L1 stalk is quite mobile in the ribosome, and is involved in E site tRNA release. Its function is as follows. Protein L1 is also a translational repressor protein, it controls the translation of the L11 operon by binding to its mRNA. The chain is Large ribosomal subunit protein uL1 from Borrelia hermsii (strain HS1 / DAH).